The chain runs to 912 residues: uncharacterized protein (912 aa).

2 stretches are compositionally biased toward basic and acidic residues: residues 20–32 and 39–67; these read IERL…AEPA and HEYE…EDKT. Residues 20–91 are disordered; sequence IERLREQGRA…KPTLPQPETD (72 aa). The span at 68–77 shows a compositional bias: basic residues; the sequence is RHKKLKHRSR.

This is an uncharacterized protein from Penicillium chrysogenum virus (isolate Caston/2003) (PcV).